Here is a 129-residue protein sequence, read N- to C-terminus: Aspartate 1-decarboxylase (129 aa).

Catalysis depends on Ser-25, which acts as the Schiff-base intermediate with substrate; via pyruvic acid. Ser-25 is modified (pyruvic acid (Ser)). Substrate is bound at residue Thr-57. The active-site Proton donor is Tyr-58. 73–75 (GAA) lines the substrate pocket.

This sequence belongs to the PanD family. In terms of assembly, heterooctamer of four alpha and four beta subunits. Pyruvate serves as cofactor. Post-translationally, is synthesized initially as an inactive proenzyme, which is activated by self-cleavage at a specific serine bond to produce a beta-subunit with a hydroxyl group at its C-terminus and an alpha-subunit with a pyruvoyl group at its N-terminus.

The protein localises to the cytoplasm. It carries out the reaction L-aspartate + H(+) = beta-alanine + CO2. It functions in the pathway cofactor biosynthesis; (R)-pantothenate biosynthesis; beta-alanine from L-aspartate: step 1/1. Its function is as follows. Catalyzes the pyruvoyl-dependent decarboxylation of aspartate to produce beta-alanine. In Hydrogenovibrio crunogenus (strain DSM 25203 / XCL-2) (Thiomicrospira crunogena), this protein is Aspartate 1-decarboxylase.